The chain runs to 433 residues: Glutamate-1-semialdehyde 2,1-aminomutase (433 aa).

The residue at position 272 (Lys-272) is an N6-(pyridoxal phosphate)lysine.

It belongs to the class-III pyridoxal-phosphate-dependent aminotransferase family. HemL subfamily. As to quaternary structure, homodimer. It depends on pyridoxal 5'-phosphate as a cofactor.

It is found in the cytoplasm. The enzyme catalyses (S)-4-amino-5-oxopentanoate = 5-aminolevulinate. Its pathway is porphyrin-containing compound metabolism; protoporphyrin-IX biosynthesis; 5-aminolevulinate from L-glutamyl-tRNA(Glu): step 2/2. It functions in the pathway porphyrin-containing compound metabolism; chlorophyll biosynthesis. The chain is Glutamate-1-semialdehyde 2,1-aminomutase from Synechococcus sp. (strain WH7803).